Consider the following 629-residue polypeptide: DNA mismatch repair protein MutL (629 aa).

It belongs to the DNA mismatch repair MutL/HexB family.

This protein is involved in the repair of mismatches in DNA. It is required for dam-dependent methyl-directed DNA mismatch repair. May act as a 'molecular matchmaker', a protein that promotes the formation of a stable complex between two or more DNA-binding proteins in an ATP-dependent manner without itself being part of a final effector complex. The polypeptide is DNA mismatch repair protein MutL (Haemophilus influenzae (strain PittGG)).